A 179-amino-acid chain; its full sequence is Large ribosomal subunit protein uL5 (179 aa).

It belongs to the universal ribosomal protein uL5 family. In terms of assembly, part of the 50S ribosomal subunit; part of the 5S rRNA/L5/L18/L25 subcomplex. Contacts the 5S rRNA and the P site tRNA. Forms a bridge to the 30S subunit in the 70S ribosome.

Functionally, this is one of the proteins that bind and probably mediate the attachment of the 5S RNA into the large ribosomal subunit, where it forms part of the central protuberance. In the 70S ribosome it contacts protein S13 of the 30S subunit (bridge B1b), connecting the 2 subunits; this bridge is implicated in subunit movement. Contacts the P site tRNA; the 5S rRNA and some of its associated proteins might help stabilize positioning of ribosome-bound tRNAs. This Shewanella putrefaciens (strain CN-32 / ATCC BAA-453) protein is Large ribosomal subunit protein uL5.